A 343-amino-acid chain; its full sequence is Thiamine-phosphate synthase (343 aa).

Positions 1 to 123 (MQQASPTAIA…GACCKQLRYR (123 aa)) are unknown. A thiamine-phosphate synthase region spans residues 124 to 343 (VYALESGLLG…LLTQLSRINP (220 aa)). Residues 171-175 (QYRDK) and Asn203 each bind 4-amino-2-methyl-5-(diphosphooxymethyl)pyrimidine. Mg(2+) contacts are provided by Asp204 and Asp223. 4-amino-2-methyl-5-(diphosphooxymethyl)pyrimidine is bound at residue Ser242. 268-270 (TPT) is a 2-[(2R,5Z)-2-carboxy-4-methylthiazol-5(2H)-ylidene]ethyl phosphate binding site. Lys271 is a 4-amino-2-methyl-5-(diphosphooxymethyl)pyrimidine binding site. Residue Gly298 coordinates 2-[(2R,5Z)-2-carboxy-4-methylthiazol-5(2H)-ylidene]ethyl phosphate.

This sequence belongs to the thiamine-phosphate synthase family. Requires Mg(2+) as cofactor.

The enzyme catalyses 2-[(2R,5Z)-2-carboxy-4-methylthiazol-5(2H)-ylidene]ethyl phosphate + 4-amino-2-methyl-5-(diphosphooxymethyl)pyrimidine + 2 H(+) = thiamine phosphate + CO2 + diphosphate. It catalyses the reaction 2-(2-carboxy-4-methylthiazol-5-yl)ethyl phosphate + 4-amino-2-methyl-5-(diphosphooxymethyl)pyrimidine + 2 H(+) = thiamine phosphate + CO2 + diphosphate. The catalysed reaction is 4-methyl-5-(2-phosphooxyethyl)-thiazole + 4-amino-2-methyl-5-(diphosphooxymethyl)pyrimidine + H(+) = thiamine phosphate + diphosphate. Its pathway is cofactor biosynthesis; thiamine diphosphate biosynthesis; thiamine phosphate from 4-amino-2-methyl-5-diphosphomethylpyrimidine and 4-methyl-5-(2-phosphoethyl)-thiazole: step 1/1. In terms of biological role, condenses 4-methyl-5-(beta-hydroxyethyl)thiazole monophosphate (THZ-P) and 2-methyl-4-amino-5-hydroxymethyl pyrimidine pyrophosphate (HMP-PP) to form thiamine monophosphate (TMP). This chain is Thiamine-phosphate synthase, found in Synechocystis sp. (strain ATCC 27184 / PCC 6803 / Kazusa).